Reading from the N-terminus, the 455-residue chain is Chromosomal replication initiator protein DnaA (455 aa).

Residues Met1–Glu82 are domain I, interacts with DnaA modulators. Positions Glu82–Thr117 are domain II. The domain III, AAA+ region stretch occupies residues Gly118–Ala335. Positions 163, 165, 166, and 167 each coordinate ATP. Residues Glu336–Ala455 form a domain IV, binds dsDNA region.

It belongs to the DnaA family. Oligomerizes as a right-handed, spiral filament on DNA at oriC.

Its subcellular location is the cytoplasm. Plays an essential role in the initiation and regulation of chromosomal replication. ATP-DnaA binds to the origin of replication (oriC) to initiate formation of the DNA replication initiation complex once per cell cycle. Binds the DnaA box (a 9 base pair repeat at the origin) and separates the double-stranded (ds)DNA. Forms a right-handed helical filament on oriC DNA; dsDNA binds to the exterior of the filament while single-stranded (ss)DNA is stabiized in the filament's interior. The ATP-DnaA-oriC complex binds and stabilizes one strand of the AT-rich DNA unwinding element (DUE), permitting loading of DNA polymerase. After initiation quickly degrades to an ADP-DnaA complex that is not apt for DNA replication. Binds acidic phospholipids. In Actinobacillus succinogenes (strain ATCC 55618 / DSM 22257 / CCUG 43843 / 130Z), this protein is Chromosomal replication initiator protein DnaA.